We begin with the raw amino-acid sequence, 537 residues long: Eukaryotic translation initiation factor 3 subunit L (537 aa).

Positions 300–512 (TFSSILLYIQ…IHIADTKVSH (213 aa)) constitute a PCI domain.

Belongs to the eIF-3 subunit L family. As to quaternary structure, component of the eukaryotic translation initiation factor 3 (eIF-3) complex.

The protein resides in the cytoplasm. Component of the eukaryotic translation initiation factor 3 (eIF-3) complex, which is involved in protein synthesis of a specialized repertoire of mRNAs and, together with other initiation factors, stimulates binding of mRNA and methionyl-tRNAi to the 40S ribosome. The eIF-3 complex specifically targets and initiates translation of a subset of mRNAs involved in cell proliferation. This is Eukaryotic translation initiation factor 3 subunit L from Culex quinquefasciatus (Southern house mosquito).